Consider the following 1125-residue polypeptide: Phytochrome A (1125 aa).

Low complexity-rich tracts occupy residues 1 to 14 (MSSSRPSHSSSNSA) and 39 to 48 (SGSSFDYSSS). Disordered stretches follow at residues 1-22 (MSSSRPSHSSSNSARSRHSARI) and 38-64 (ESGSSFDYSSSVRVTDSVGGDQPPRSD). The region spanning 218–401 (SMERLCDTMV…VFAIHVNKEL (184 aa)) is the GAF domain. Position 323 (Cys323) interacts with phytochromobilin. PAS domains lie at 617 to 687 (VTSE…LQGK) and 750 to 821 (DYKA…VNLG). The 217-residue stretch at 901 to 1117 (YLKKQIWNPL…SFIISVELAG (217 aa)) folds into the Histidine kinase domain.

This sequence belongs to the phytochrome family. Homodimer. In terms of processing, contains one covalently linked phytochromobilin chromophore.

Regulatory photoreceptor which exists in two forms that are reversibly interconvertible by light: the Pr form that absorbs maximally in the red region of the spectrum and the Pfr form that absorbs maximally in the far-red region. Photoconversion of Pr to Pfr induces an array of morphogenic responses, whereas reconversion of Pfr to Pr cancels the induction of those responses. Pfr controls the expression of a number of nuclear genes including those encoding the small subunit of ribulose-bisphosphate carboxylase, chlorophyll A/B binding protein, protochlorophyllide reductase, rRNA, etc. It also controls the expression of its own gene(s) in a negative feedback fashion. In Populus tremuloides (Quaking aspen), this protein is Phytochrome A (PHYA).